Here is a 281-residue protein sequence, read N- to C-terminus: Pantothenate synthetase (281 aa).

Residue 30-37 (MGNLHQGH) participates in ATP binding. His37 acts as the Proton donor in catalysis. Gln61 serves as a coordination point for (R)-pantoate. Residue Gln61 participates in beta-alanine binding. 149–152 (GNKD) is an ATP binding site. Gln155 contacts (R)-pantoate. Residues Ile178 and 186-189 (MSSR) each bind ATP.

Belongs to the pantothenate synthetase family. As to quaternary structure, homodimer.

The protein localises to the cytoplasm. It catalyses the reaction (R)-pantoate + beta-alanine + ATP = (R)-pantothenate + AMP + diphosphate + H(+). It participates in cofactor biosynthesis; (R)-pantothenate biosynthesis; (R)-pantothenate from (R)-pantoate and beta-alanine: step 1/1. In terms of biological role, catalyzes the condensation of pantoate with beta-alanine in an ATP-dependent reaction via a pantoyl-adenylate intermediate. In Shewanella baltica (strain OS223), this protein is Pantothenate synthetase.